Here is a 186-residue protein sequence, read N- to C-terminus: MDKNSRYTVDSSILFRQWLNDTREMVQDTIFHSRIQKKNNNHLVSQRVFFEQNAHSHYFSYRNNKNLFKENPVSYIRHQSLYNVLKNLKKGRYNPDISIDLHGLTQHQAQQALGELITTCQKEKIFCAHIMHGHGKHILKKQTPFWLSQHPDIIAFHEAPKFFGSDAAIIVIIEINSLKKNINIFN.

The region spanning 99-174 (IDLHGLTQHQ…SDAAIIVIIE (76 aa)) is the Smr domain.

The protein belongs to the SmrB family. As to quaternary structure, associates with collided ribosomes, but not with correctly translating polysomes.

Its function is as follows. Acts as a ribosome collision sensor. Detects stalled/collided disomes (pairs of ribosomes where the leading ribosome is stalled and a second ribosome has collided with it) and endonucleolytically cleaves mRNA at the 5' boundary of the stalled ribosome. Stalled/collided disomes form a new interface (primarily via the 30S subunits) that binds SmrB. Cleaved mRNA becomes available for tmRNA ligation, leading to ribosomal subunit dissociation and rescue of stalled ribosomes. The chain is Ribosome rescue factor SmrB from Buchnera aphidicola subsp. Acyrthosiphon pisum (strain Tuc7).